A 265-amino-acid chain; its full sequence is Early E4 31 kDa protein (265 aa).

Belongs to the adenoviridae E4 30 to 34 kDa protein family. Interacts with E1B-55k.

The protein resides in the host nucleus. It is found in the host cytoplasm. Functionally, plays a major role to prevent cellular inhibition of viral genome replication by nuclear bodies. Assembles an SCF-like E3 ubiquitin ligase complex based on the cellular proteins ELOB, ELOC, CUL5 and RBX1, in cooperation with viral E1B-55K. This viral RING-type ligase ubiquitinates cellular substrates prior to proteasomal degradation: p53/TP53, LIG4, MRE11-RAD50-NBS1 (MRN) complex, ITGA3, DAXX and BLM. This is Early E4 31 kDa protein from Canine adenovirus serotype 1 (strain RI261) (CAdV-1).